A 329-amino-acid polypeptide reads, in one-letter code: Ephrin-B1 (329 aa).

Positions 1 to 20 are cleaved as a signal peptide; that stretch reads MEGLRRLLGLLLVLYRLCSA. Residues 21-226 lie on the Extracellular side of the membrane; it reads LGKNLEPVTW…FFNSKIAVFA (206 aa). In terms of domain architecture, Ephrin RBD spans 23–157; sequence KNLEPVTWNS…TRSMKIIMKV (135 aa). Cystine bridges form between Cys-57–Cys-94 and Cys-82–Cys-146. N-linked (GlcNAc...) asparagine glycosylation occurs at Asn-132. The interval 163–192 is disordered; the sequence is AVPPEQLTTTRPSKEADNTGKIATFGPWNG. The N-linked (GlcNAc...) asparagine glycan is linked to Asn-203. Residues 227-247 form a helical membrane-spanning segment; it reads AIGAGCVIFILIIIFLVVLLI. The Cytoplasmic segment spans residues 248 to 329; that stretch reads KIRKRHRKHT…QSPANIYYKV (82 aa). Residues 327–329 carry the PDZ-binding motif; the sequence is YKV.

This sequence belongs to the ephrin family. As to quaternary structure, interacts with TLE4 through the PDZ-binding motif. Inducible phosphorylation of tyrosine residues in the cytoplasmic domain. Tyrosine phosphorylation inhibits TLE4-binding. In terms of tissue distribution, expressed at low levels in most tissues with highest levels in the kidney, oocytes, ovary and testis.

The protein localises to the membrane. Functionally, cell surface transmembrane ligand for Eph receptors, a family of receptor tyrosine kinases which are crucial for migration, repulsion and adhesion during neuronal, vascular and epithelial development. Binds promiscuously Eph receptors residing on adjacent cells, leading to contact-dependent bidirectional signaling into neighboring cells. The signaling pathway downstream of the receptor is referred to as forward signaling while the signaling pathway downstream of the ephrin ligand is referred to as reverse signaling. May have a role in the developing mesenchymal and nervous tissue. The polypeptide is Ephrin-B1 (efnb1) (Xenopus laevis (African clawed frog)).